The sequence spans 187 residues: Pyridoxal 5'-phosphate synthase subunit PdxT (187 aa).

Position 47–49 (47–49 (GES)) interacts with L-glutamine. Residue Cys76 is the Nucleophile of the active site. L-glutamine is bound by residues Arg102 and 128 to 129 (IR). Active-site charge relay system residues include His165 and Glu167.

It belongs to the glutaminase PdxT/SNO family. In the presence of PdxS, forms a dodecamer of heterodimers. Only shows activity in the heterodimer.

The enzyme catalyses aldehydo-D-ribose 5-phosphate + D-glyceraldehyde 3-phosphate + L-glutamine = pyridoxal 5'-phosphate + L-glutamate + phosphate + 3 H2O + H(+). The catalysed reaction is L-glutamine + H2O = L-glutamate + NH4(+). Its pathway is cofactor biosynthesis; pyridoxal 5'-phosphate biosynthesis. Functionally, catalyzes the hydrolysis of glutamine to glutamate and ammonia as part of the biosynthesis of pyridoxal 5'-phosphate. The resulting ammonia molecule is channeled to the active site of PdxS. The sequence is that of Pyridoxal 5'-phosphate synthase subunit PdxT from Methanococcus maripaludis (strain C5 / ATCC BAA-1333).